The primary structure comprises 158 residues: UPF0336 protein Mb0654 (158 aa).

This sequence belongs to the UPF0336 family.

The protein is UPF0336 protein Mb0654 of Mycobacterium bovis (strain ATCC BAA-935 / AF2122/97).